Reading from the N-terminus, the 129-residue chain is Small ribosomal subunit protein uS11 (129 aa).

Belongs to the universal ribosomal protein uS11 family. Part of the 30S ribosomal subunit. Interacts with proteins S7 and S18. Binds to IF-3.

In terms of biological role, located on the platform of the 30S subunit, it bridges several disparate RNA helices of the 16S rRNA. Forms part of the Shine-Dalgarno cleft in the 70S ribosome. In Chelativorans sp. (strain BNC1), this protein is Small ribosomal subunit protein uS11.